Reading from the N-terminus, the 626-residue chain is Carnitine O-acetyltransferase (626 aa).

Lys93 carries the post-translational modification N6-succinyllysine. At Lys261 the chain carries N6-acetyllysine; alternate. N6-succinyllysine; alternate is present on Lys261. Residue Lys268 is modified to N6-acetyllysine. The active-site Proton acceptor is His343. CoA is bound by residues Lys419 and 423–430; that span reads KSEKLSPD. Residues Tyr452 and Ser454 each coordinate (R)-carnitine. Ser456 provides a ligand contact to CoA. Residue Thr465 coordinates (R)-carnitine. Arg504 and Gln555 together coordinate CoA. Residues 624 to 626 carry the Microbody targeting signal motif; that stretch reads AKL.

Belongs to the carnitine/choline acetyltransferase family. In terms of assembly, monomer.

It localises to the endoplasmic reticulum. Its subcellular location is the peroxisome. The protein localises to the mitochondrion inner membrane. The catalysed reaction is (R)-carnitine + acetyl-CoA = O-acetyl-(R)-carnitine + CoA. The enzyme catalyses propanoyl-CoA + (R)-carnitine = O-propanoyl-(R)-carnitine + CoA. It carries out the reaction butanoyl-CoA + (R)-carnitine = O-butanoyl-(R)-carnitine + CoA. It catalyses the reaction hexanoyl-CoA + (R)-carnitine = O-hexanoyl-(R)-carnitine + CoA. The catalysed reaction is octanoyl-CoA + (R)-carnitine = O-octanoyl-(R)-carnitine + CoA. The enzyme catalyses decanoyl-CoA + (R)-carnitine = O-decanoyl-(R)-carnitine + CoA. It carries out the reaction 3-methylbutanoyl-CoA + (R)-carnitine = O-3-methylbutanoyl-(R)-carnitine + CoA. It catalyses the reaction 2-methylpropanoyl-CoA + (R)-carnitine = O-isobutanoyl-(R)-carnitine + CoA. The catalysed reaction is 2-methylbutanoyl-CoA + (R)-carnitine = O-2-methylbutanoyl-(R)-carnitine + CoA. The enzyme catalyses acetoacetyl-CoA + (R)-carnitine = O-3-oxobutanoyl-(R)-carnitine + CoA. It carries out the reaction 3-hydroxybutanoyl-CoA + (R)-carnitine = O-3-hydroxybutanoyl-(R)-carnitine + CoA. It catalyses the reaction 4,8-dimethylnonanoyl-CoA + (R)-carnitine = O-4,8-dimethylnonanoyl-(R)-carnitine + CoA. The catalysed reaction is 2,6-dimethylheptanoyl-CoA + (R)-carnitine = O-2,6-dimethylheptanoyl-(R)-carnitine + CoA. Catalyzes the reversible transfer of acyl groups from carnitine to coenzyme A (CoA) and regulates the acyl-CoA/CoA ratio. Also plays a crucial role in the transport of fatty acids for beta-oxidation. Responsible for the synthesis of short- and branched-chain acylcarnitines. Active towards some branched-chain amino acid oxidation pathway (BCAAO) intermediates. Trans-2-enoyl-CoAs and 2-methylacyl-CoAs are poor substrates. The protein is Carnitine O-acetyltransferase of Mus musculus (Mouse).